The sequence spans 784 residues: Lon protease (784 aa).

The 202-residue stretch at 6 to 207 (LPLMALRDMV…TVITTLTSNI (202 aa)) folds into the Lon N-terminal domain. 356-363 (GPPGVGKT) contributes to the ATP binding site. The region spanning 592-773 (EDQIGSTTGL…DQVLKHALVE (182 aa)) is the Lon proteolytic domain. Residues Ser679 and Lys722 contribute to the active site.

Belongs to the peptidase S16 family. In terms of assembly, homohexamer. Organized in a ring with a central cavity.

It is found in the cytoplasm. It carries out the reaction Hydrolysis of proteins in presence of ATP.. ATP-dependent serine protease that mediates the selective degradation of mutant and abnormal proteins as well as certain short-lived regulatory proteins. Required for cellular homeostasis and for survival from DNA damage and developmental changes induced by stress. Degrades polypeptides processively to yield small peptide fragments that are 5 to 10 amino acids long. Binds to DNA in a double-stranded, site-specific manner. The polypeptide is Lon protease (Rickettsia prowazekii (strain Madrid E)).